The chain runs to 235 residues: 1-(5-phosphoribosyl)-5-[(5-phosphoribosylamino)methylideneamino] imidazole-4-carboxamide isomerase (235 aa).

Residue D8 is the Proton acceptor of the active site. The Proton donor role is filled by D127.

It belongs to the HisA/HisF family.

It is found in the cytoplasm. The catalysed reaction is 1-(5-phospho-beta-D-ribosyl)-5-[(5-phospho-beta-D-ribosylamino)methylideneamino]imidazole-4-carboxamide = 5-[(5-phospho-1-deoxy-D-ribulos-1-ylimino)methylamino]-1-(5-phospho-beta-D-ribosyl)imidazole-4-carboxamide. It functions in the pathway amino-acid biosynthesis; L-histidine biosynthesis; L-histidine from 5-phospho-alpha-D-ribose 1-diphosphate: step 4/9. The protein is 1-(5-phosphoribosyl)-5-[(5-phosphoribosylamino)methylideneamino] imidazole-4-carboxamide isomerase of Aliarcobacter butzleri (strain RM4018) (Arcobacter butzleri).